We begin with the raw amino-acid sequence, 581 residues long: Tail sheath protein (581 aa).

This sequence belongs to the myoviridae tail sheath protein family. In terms of assembly, homomultimer.

The protein resides in the virion. Its subcellular location is the host cytoplasm. Polymerizes as an extended structure around the baseplate-tail tube complex. During ejection, the sheath shifts to a contracted form, thereby making the inner tail tube protrude through the host cell envelope. The chain is Tail sheath protein from Mycobacterium phage Bxz1 (Mycobacteriophage Bxz1).